The primary structure comprises 158 residues: MSDEEHHFESSDAGASKTYPQQAGTIRKNGYIVIKNRPCKVVEVSTSKTGKHGHAKCHFVAIDIFTSKKLEDIVPSSHNCDVPHVNRTDYQLIDISEDGYVSLLTDNGSTKDDLKLPNDDTLLQQIKSGFDDGKDLVVSVMSAMGEEQINALKDIGPK.

Over residues 1-10 the composition is skewed to basic and acidic residues; it reads MSDEEHHFES. Residues 1-21 are disordered; the sequence is MSDEEHHFESSDAGASKTYPQ. At S2 the chain carries Phosphoserine. Residue K51 is modified to Hypusine.

Belongs to the eIF-5A family. In terms of processing, lys-51 undergoes hypusination, a unique post-translational modification that consists in the addition of a butylamino group from spermidine to lysine side chain, leading to the formation of the unusual amino acid hypusine. eIF-5As are the only known proteins to undergo this modification, which is essential for their function. In terms of tissue distribution, expressed in leaf vasculature and inflorescence stems. Present in xylem tissue but not in phloem, and in developing vessel members, but not in mature vessels members. Detected in anthers.

Its function is as follows. Translation factor that promotes translation elongation and termination, particularly upon ribosome stalling at specific amino acid sequence contexts. Binds between the exit (E) and peptidyl (P) site of the ribosome and promotes rescue of stalled ribosome: specifically required for efficient translation of polyproline-containing peptides as well as other motifs that stall the ribosome. Acts as a ribosome quality control (RQC) cofactor by joining the RQC complex to facilitate peptidyl transfer during CAT tailing step. Involved in xylogenesis. The chain is Eukaryotic translation initiation factor 5A-1 (ELF5A-1) from Arabidopsis thaliana (Mouse-ear cress).